The sequence spans 103 residues: Large ribosomal subunit protein bL21 (103 aa).

The protein belongs to the bacterial ribosomal protein bL21 family. As to quaternary structure, part of the 50S ribosomal subunit. Contacts protein L20.

Its function is as follows. This protein binds to 23S rRNA in the presence of protein L20. The protein is Large ribosomal subunit protein bL21 of Vesicomyosocius okutanii subsp. Calyptogena okutanii (strain HA).